Here is a 1123-residue protein sequence, read N- to C-terminus: Adenylyl cyclase X E (1123 aa).

At 1 to 47 the chain is on the cytoplasmic side; the sequence is MPRSLGNCQLNYSKERMWEPGYLKAKCAELRLESEFRLYRIRLWKSY. A helical transmembrane segment spans residues 48–68; sequence LLTFFMLHIFVTSVHCALLLA. The Extracellular segment spans residues 69-73; that stretch reads TIERR. Residues 74 to 94 traverse the membrane as a helical segment; that stretch reads SIIYFDVALSIGCALVLILVL. Over 95 to 106 the chain is Cytoplasmic; the sequence is SVNFCDEFIAKH. A helical membrane pass occupies residues 107-127; the sequence is TWYMYASSIFASLTLVFADLT. The Extracellular portion of the chain corresponds to 128-137; the sequence is ESIYHTYAHS. The helical transmembrane segment at 138–158 threads the bilayer; sequence WILGTFYDTYIIYMIYMFLPI. The Cytoplasmic portion of the chain corresponds to 159–163; the sequence is HFISG. Residues 164–184 traverse the membrane as a helical segment; it reads AVLLALLVSGLYILYFVIFIA. Over 185-196 the chain is Extracellular; that stretch reads QGFAQFASALFS. A helical transmembrane segment spans residues 197–217; it reads VGGMSVDIVHYLCLNLVGIFY. The Cytoplasmic segment spans residues 218 to 581; that stretch reads RVMNDTVVRS…YLKQTDYMYK (364 aa). Residues 346 to 348 and Arg-392 contribute to the ATP site; that span reads LGD. Residue Asp-348 participates in Mg(2+) binding. Residues 582-602 traverse the membrane as a helical segment; the sequence is YSIILSASVGCSLVYIELMDT. Over 603–608 the chain is Extracellular; the sequence is QMICSS. The helical transmembrane segment at 609 to 629 threads the bilayer; the sequence is CFVLPASVATIQCILALIAWY. The Cytoplasmic segment spans residues 630–667; that stretch reads KKYCWTRYGRNNVPHHYNGFSCFIFRIHDKILNSLPIR. A helical membrane pass occupies residues 668–688; that stretch reads ICIYLFLMISSFFVMCLIVMS. Residues 689-719 are Extracellular-facing; sequence CQREEFEMAYIEERLFHYEQEAHICFHPWVT. Residues 720–740 form a helical membrane-spanning segment; the sequence is TNMLSLMICLTFTFAHIPIMV. Residues 741–743 are Cytoplasmic-facing; sequence KTA. A helical transmembrane segment spans residues 744–764; that stretch reads VAILETLAYLLLIFFQFDFVF. Residues 765–772 are Extracellular-facing; sequence HHSVTTNP. A helical transmembrane segment spans residues 773 to 793; that stretch reads YFKSEYAHALLICITFLIMFV. Topologically, residues 794–1123 are cytoplasmic; the sequence is KERQIEFTNK…STSRHTLQSL (330 aa). ATP is bound by residues Lys-903, 1014–1016, 1021–1025, and Lys-1061; these read DIW and NMASR.

It belongs to the adenylyl cyclase class-4/guanylyl cyclase family. Expressed in labella.

It is found in the membrane. It catalyses the reaction ATP = 3',5'-cyclic AMP + diphosphate. In terms of biological role, catalyzes the formation of the signaling molecule cAMP in response to G-protein signaling. In Drosophila melanogaster (Fruit fly), this protein is Adenylyl cyclase X E.